The sequence spans 204 residues: UPF0637 protein LMHCC_1566 (204 aa).

The protein belongs to the UPF0637 family.

This Listeria monocytogenes serotype 4a (strain HCC23) protein is UPF0637 protein LMHCC_1566.